The sequence spans 1020 residues: Vacuolar membrane protease (1020 aa).

Residues 1-11 lie on the Cytoplasmic side of the membrane; it reads MKCHNPFGFRV. Residues 12–32 form a helical membrane-spanning segment; sequence GPVTFWTIIIYLALLVPLLWI. The Vacuolar portion of the chain corresponds to 33–410; sequence HETVPPAPSS…GFAVFGLRGL (378 aa). N-linked (GlcNAc...) asparagine glycans are attached at residues N50, N94, and N130. Zn(2+) contacts are provided by H191 and D203. E237 acts as the Proton acceptor in catalysis. The Zn(2+) site is built by E238, E263, and H336. Residues 411 to 431 form a helical membrane-spanning segment; that stretch reads FAWSLTLLIVSPLILAILVFI. Residues 432–467 lie on the Cytoplasmic side of the membrane; that stretch reads LNRHDKLYFFSRKINVHNEGSEDPVSIGGFRGFTRF. The helical transmembrane segment at 468-488 threads the bilayer; it reads PIAVGFSGALTLASAFLLTKI. Topologically, residues 489 to 491 are vacuolar; that stretch reads NPM. The chain crosses the membrane as a helical span at residues 492–512; that stretch reads IVYSSEYAVWGMMLSLFYVSL. The Cytoplasmic portion of the chain corresponds to 513-529; sequence WMTLKGSSAVRPSALQR. The helical transmembrane segment at 530-550 threads the bilayer; that stretch reads GYIHIWLFIVSWGLLIVVAVT. Topologically, residues 551-561 are vacuolar; the sequence is EDRLKIASGYP. A helical transmembrane segment spans residues 562 to 582; that stretch reads VVFLHSALFLSTVISFLELFG. The Cytoplasmic segment spans residues 583–690; it reads LTKKHDYARR…RLPGWTWILQ (108 aa). The tract at residues 609-648 is disordered; that stretch reads DDALIAPDTPNDEAEDSDGEDSEHEPTETTPLRAGGDSRV. Residues 618–631 show a composition bias toward acidic residues; it reads PNDEAEDSDGEDSE. The helical transmembrane segment at 691–711 threads the bilayer; that stretch reads FLLLAPINVILWGQIGLFAVA. Residues 712–724 are Vacuolar-facing; sequence ATQAGGADGGSVL. Residues 725 to 745 form a helical membrane-spanning segment; sequence TTYLIIAVLSIVILVPLAPFI. Residues 746–750 are Cytoplasmic-facing; that stretch reads HRVHY. Residues 751-771 traverse the membrane as a helical segment; it reads YVPIILFAAFAGTLIYNLIAF. Residues 772–1020 lie on the Vacuolar side of the membrane; the sequence is PFSANNRYKI…VGLVRPVKRF (249 aa). N-linked (GlcNAc...) asparagine glycosylation is found at N851, N868, and N873.

Belongs to the peptidase M28 family. Zn(2+) is required as a cofactor.

The protein resides in the vacuole membrane. Functionally, may be involved in vacuolar sorting and osmoregulation. This chain is Vacuolar membrane protease, found in Verticillium alfalfae (strain VaMs.102 / ATCC MYA-4576 / FGSC 10136) (Verticillium wilt of alfalfa).